Consider the following 244-residue polypeptide: ATP synthase subunit a, chloroplastic (244 aa).

5 helical membrane-spanning segments follow: residues 35–55 (QVLI…VIAV), 92–112 (VPFI…GALL), 131–151 (INTT…AGLS), 196–216 (LVVV…VMFL), and 217–237 (GLFI…AYIG).

This sequence belongs to the ATPase A chain family. As to quaternary structure, F-type ATPases have 2 components, CF(1) - the catalytic core - and CF(0) - the membrane proton channel. CF(1) has five subunits: alpha(3), beta(3), gamma(1), delta(1), epsilon(1). CF(0) has four main subunits: a, b, b' and c.

The protein resides in the plastid. It localises to the chloroplast thylakoid membrane. Its function is as follows. Key component of the proton channel; it plays a direct role in the translocation of protons across the membrane. In Gossypium barbadense (Sea Island cotton), this protein is ATP synthase subunit a, chloroplastic.